Consider the following 156-residue polypeptide: 6,7-dimethyl-8-ribityllumazine synthase (156 aa).

Residues F22, 57 to 59 (AYE), and 81 to 83 (TVI) contribute to the 5-amino-6-(D-ribitylamino)uracil site. Residue 86–87 (GT) participates in (2S)-2-hydroxy-3-oxobutyl phosphate binding. H89 (proton donor) is an active-site residue. F114 provides a ligand contact to 5-amino-6-(D-ribitylamino)uracil. R128 provides a ligand contact to (2S)-2-hydroxy-3-oxobutyl phosphate.

It belongs to the DMRL synthase family. Forms an icosahedral capsid composed of 60 subunits, arranged as a dodecamer of pentamers.

The enzyme catalyses (2S)-2-hydroxy-3-oxobutyl phosphate + 5-amino-6-(D-ribitylamino)uracil = 6,7-dimethyl-8-(1-D-ribityl)lumazine + phosphate + 2 H2O + H(+). It functions in the pathway cofactor biosynthesis; riboflavin biosynthesis; riboflavin from 2-hydroxy-3-oxobutyl phosphate and 5-amino-6-(D-ribitylamino)uracil: step 1/2. In terms of biological role, catalyzes the formation of 6,7-dimethyl-8-ribityllumazine by condensation of 5-amino-6-(D-ribitylamino)uracil with 3,4-dihydroxy-2-butanone 4-phosphate. This is the penultimate step in the biosynthesis of riboflavin. This chain is 6,7-dimethyl-8-ribityllumazine synthase, found in Mannheimia succiniciproducens (strain KCTC 0769BP / MBEL55E).